An 84-amino-acid chain; its full sequence is Toxin Tb1 (84 aa).

The first 20 residues, 1-20 (MKGMILFISCLLLIGIVVEC), serve as a signal peptide directing secretion. In terms of domain architecture, LCN-type CS-alpha/beta spans 21-82 (KEGYLMDHEG…VWDRATNKCG (62 aa)). 4 disulfide bridges follow: Cys31–Cys81, Cys35–Cys57, Cys43–Cys62, and Cys47–Cys64. Cys81 carries the cysteine amide modification.

This sequence belongs to the long (4 C-C) scorpion toxin superfamily. Sodium channel inhibitor family. Beta subfamily. In terms of tissue distribution, expressed by the venom gland.

The protein resides in the secreted. Its function is as follows. Beta toxins bind voltage-independently at site-4 of sodium channels (Nav) and shift the voltage of activation toward more negative potentials thereby affecting sodium channel activation and promoting spontaneous and repetitive firing. Is lethal to mice. This is Toxin Tb1 from Tityus bahiensis (Brazilian scorpion).